The following is a 161-amino-acid chain: Phosphopantetheine adenylyltransferase (161 aa).

Position 10 (T10) interacts with substrate. ATP-binding positions include 10–11 (TF) and H18. Substrate contacts are provided by K42, L74, and R88. Residues 89-91 (GLR), E99, and 124-130 (NAFISSS) contribute to the ATP site.

It belongs to the bacterial CoaD family. Homohexamer. The cofactor is Mg(2+).

It is found in the cytoplasm. It carries out the reaction (R)-4'-phosphopantetheine + ATP + H(+) = 3'-dephospho-CoA + diphosphate. Its pathway is cofactor biosynthesis; coenzyme A biosynthesis; CoA from (R)-pantothenate: step 4/5. Its function is as follows. Reversibly transfers an adenylyl group from ATP to 4'-phosphopantetheine, yielding dephospho-CoA (dPCoA) and pyrophosphate. The chain is Phosphopantetheine adenylyltransferase from Wolinella succinogenes (strain ATCC 29543 / DSM 1740 / CCUG 13145 / JCM 31913 / LMG 7466 / NCTC 11488 / FDC 602W) (Vibrio succinogenes).